A 346-amino-acid polypeptide reads, in one-letter code: Sulfate/thiosulfate import ATP-binding protein CysA 1 (346 aa).

An ABC transporter domain is found at 3 to 237 (VKVSGITKQF…PNSPFVFSFI (235 aa)). 35–42 (GPSGSGKT) contributes to the ATP binding site.

Belongs to the ABC transporter superfamily. Sulfate/tungstate importer (TC 3.A.1.6) family. As to quaternary structure, the complex is composed of two ATP-binding proteins (CysA), two transmembrane proteins (CysT and CysW) and a solute-binding protein (CysP).

The protein resides in the cell inner membrane. It carries out the reaction sulfate(out) + ATP + H2O = sulfate(in) + ADP + phosphate + H(+). It catalyses the reaction thiosulfate(out) + ATP + H2O = thiosulfate(in) + ADP + phosphate + H(+). In terms of biological role, part of the ABC transporter complex CysAWTP involved in sulfate/thiosulfate import. Responsible for energy coupling to the transport system. This Agrobacterium fabrum (strain C58 / ATCC 33970) (Agrobacterium tumefaciens (strain C58)) protein is Sulfate/thiosulfate import ATP-binding protein CysA 1.